Reading from the N-terminus, the 195-residue chain is ATP-dependent Clp protease proteolytic subunit (195 aa).

The Nucleophile role is filled by Ser98. His123 is a catalytic residue.

This sequence belongs to the peptidase S14 family. As to quaternary structure, fourteen ClpP subunits assemble into 2 heptameric rings which stack back to back to give a disk-like structure with a central cavity, resembling the structure of eukaryotic proteasomes.

It is found in the cytoplasm. It carries out the reaction Hydrolysis of proteins to small peptides in the presence of ATP and magnesium. alpha-casein is the usual test substrate. In the absence of ATP, only oligopeptides shorter than five residues are hydrolyzed (such as succinyl-Leu-Tyr-|-NHMec, and Leu-Tyr-Leu-|-Tyr-Trp, in which cleavage of the -Tyr-|-Leu- and -Tyr-|-Trp bonds also occurs).. Cleaves peptides in various proteins in a process that requires ATP hydrolysis. Has a chymotrypsin-like activity. Plays a major role in the degradation of misfolded proteins. This Helicobacter pylori (strain Shi470) protein is ATP-dependent Clp protease proteolytic subunit.